The following is a 292-amino-acid chain: Large ribosomal subunit protein mL67 (292 aa).

Residues 59–83 form a disordered region; that stretch reads VELKSPSRLQLKSEPGNKGNPKGHG.

It belongs to the mitochondrion-specific ribosomal protein mL67 family. Component of the mitochondrial large ribosomal subunit (mt-LSU). Mature N.crassa 74S mitochondrial ribosomes consist of a small (37S) and a large (54S) subunit. The 37S small subunit contains a 16S ribosomal RNA (16S mt-rRNA) and 32 different proteins. The 54S large subunit contains a 23S rRNA (23S mt-rRNA) and 42 different proteins.

Its subcellular location is the mitochondrion. Its function is as follows. Component of the mitochondrial ribosome (mitoribosome), a dedicated translation machinery responsible for the synthesis of mitochondrial genome-encoded proteins, including at least some of the essential transmembrane subunits of the mitochondrial respiratory chain. The mitoribosomes are attached to the mitochondrial inner membrane and translation products are cotranslationally integrated into the membrane. mL67/MHR1 also has extraribosomal functions, being involved in regulation of mitochondrial DNA recombination, maintenance and repair, and generation of homoplasmic cells. mL67/MHR1 also acts as a transcription factor involved in regulation of RNA polymerase II-dependent transcription. This chain is Large ribosomal subunit protein mL67 (mhr1), found in Neurospora crassa (strain ATCC 24698 / 74-OR23-1A / CBS 708.71 / DSM 1257 / FGSC 987).